The following is a 106-amino-acid chain: uncharacterized protein (106 aa).

This is an uncharacterized protein from Methanocaldococcus jannaschii (strain ATCC 43067 / DSM 2661 / JAL-1 / JCM 10045 / NBRC 100440) (Methanococcus jannaschii).